A 324-amino-acid polypeptide reads, in one-letter code: Probable carboxylesterase 9 (324 aa).

The Involved in the stabilization of the negatively charged intermediate by the formation of the oxyanion hole motif lies at 86-88; sequence HGS. Residues Ser-171, Asp-272, and His-302 contribute to the active site.

It belongs to the 'GDXG' lipolytic enzyme family. In terms of tissue distribution, expressed in flowers.

The catalysed reaction is a carboxylic ester + H2O = an alcohol + a carboxylate + H(+). Functionally, carboxylesterase acting on esters with varying acyl chain length. The protein is Probable carboxylesterase 9 (CXE9) of Arabidopsis thaliana (Mouse-ear cress).